Reading from the N-terminus, the 447-residue chain is Histidine--tRNA ligase (447 aa).

Belongs to the class-II aminoacyl-tRNA synthetase family. Homodimer.

The protein localises to the cytoplasm. The catalysed reaction is tRNA(His) + L-histidine + ATP = L-histidyl-tRNA(His) + AMP + diphosphate + H(+). This is Histidine--tRNA ligase (hisS) from Synechocystis sp. (strain ATCC 27184 / PCC 6803 / Kazusa).